We begin with the raw amino-acid sequence, 123 residues long: WAP four-disulfide core domain protein 5 (123 aa).

The first 24 residues, 1–24 (MRIQSLLLLGALLAVGSQLPAVFG), serve as a signal peptide directing secretion. WAP domains lie at 27 to 73 (KGEK…CVPR) and 74 to 121 (VSVK…RDPA). 8 cysteine pairs are disulfide-bonded: Cys34–Cys62, Cys41–Cys66, Cys49–Cys61, Cys55–Cys70, Cys81–Cys109, Cys88–Cys113, Cys96–Cys108, and Cys102–Cys117.

It localises to the secreted. Its function is as follows. Putative acid-stable proteinase inhibitor. This Pongo abelii (Sumatran orangutan) protein is WAP four-disulfide core domain protein 5 (WFDC5).